We begin with the raw amino-acid sequence, 261 residues long: Flagellar L-ring protein (261 aa).

An N-terminal signal peptide occupies residues 1 to 18 (MAAMKRLLASSLLILLSG). The N-palmitoyl cysteine moiety is linked to residue Cys19. The S-diacylglycerol cysteine moiety is linked to residue Cys19. The interval 37–67 (TVDAVEGDKSESNSGLTDALRNRTDPVAGDP) is disordered.

The protein belongs to the FlgH family. In terms of assembly, the basal body constitutes a major portion of the flagellar organelle and consists of four rings (L,P,S, and M) mounted on a central rod.

Its subcellular location is the cell outer membrane. The protein resides in the bacterial flagellum basal body. Assembles around the rod to form the L-ring and probably protects the motor/basal body from shearing forces during rotation. This is Flagellar L-ring protein from Vibrio cholerae serotype O1 (strain ATCC 39541 / Classical Ogawa 395 / O395).